The chain runs to 264 residues: COP9 signalosome complex subunit 7b (264 aa).

Alanine 2 bears the N-acetylalanine mark. A PCI domain is found at 2–159 (AGEQKPSSNL…QLLEVDFCIG (158 aa)). Residues 188 to 237 (IEQQVLRANQYKENHNRTQQQVEAEVTNIKKTLKATASSSAQEMEQQLAE) adopt a coiled-coil conformation. Over residues 223–232 (TASSSAQEME) the composition is skewed to polar residues. A disordered region spans residues 223 to 264 (TASSSAQEMEQQLAERECPPHAEQRQPTKKMSKVKGLVSSRH). The span at 235–248 (LAERECPPHAEQRQ) shows a compositional bias: basic and acidic residues. A Phosphothreonine modification is found at serine 261. Phosphoserine is present on arginine 263.

Belongs to the CSN7/EIF3M family. CSN7 subfamily. Component of the CSN complex, composed of COPS1/GPS1, COPS2, COPS3, COPS4, COPS5, COPS6, COPS7 (COPS7A or COPS7B), COPS8 and COPS9 isoform 1. In the complex, it probably interacts directly with COPS1, COPS2, COPS4, COPS5, COPS6 and COPS8. Interacts with EIF3S6. In terms of assembly, (Microbial infection) Interacts with vaccinia virus protein C9L.

Its subcellular location is the cytoplasm. It localises to the nucleus. Functionally, component of the COP9 signalosome complex (CSN), a complex involved in various cellular and developmental processes. The CSN complex is an essential regulator of the ubiquitin (Ubl) conjugation pathway by mediating the deneddylation of the cullin subunits of SCF-type E3 ligase complexes, leading to decrease the Ubl ligase activity of SCF-type complexes such as SCF, CSA or DDB2. The complex is also involved in phosphorylation of p53/TP53, JUN, I-kappa-B-alpha/NFKBIA, ITPK1 and IRF8/ICSBP, possibly via its association with CK2 and PKD kinases. CSN-dependent phosphorylation of TP53 and JUN promotes and protects degradation by the Ubl system, respectively. This Homo sapiens (Human) protein is COP9 signalosome complex subunit 7b (COPS7B).